The sequence spans 218 residues: Guanylate kinase (218 aa).

The region spanning 14–193 (GLMLVLSSPS…AFAEVRGIVV (180 aa)) is the Guanylate kinase-like domain. 21-28 (SPSGAGKS) provides a ligand contact to ATP.

This sequence belongs to the guanylate kinase family.

Its subcellular location is the cytoplasm. The enzyme catalyses GMP + ATP = GDP + ADP. Its function is as follows. Essential for recycling GMP and indirectly, cGMP. In Mesorhizobium japonicum (strain LMG 29417 / CECT 9101 / MAFF 303099) (Mesorhizobium loti (strain MAFF 303099)), this protein is Guanylate kinase (gmk).